A 2365-amino-acid chain; its full sequence is Voltage-dependent T-type calcium channel subunit alpha-1H (2365 aa).

The interval 1-63 (MTEGTLAADE…PGTECGADLG (63 aa)) is disordered. Over 1 to 100 (MTEGTLAADE…SWCLRLVSRR (100 aa)) the chain is Cytoplasmic. A compositionally biased stretch (low complexity) spans 16 to 36 (GASPSAPAAPVRASPASPGVP). One copy of the I repeat lies at 87-422 (TRPRSWCLRL…LCLVVIATQF (336 aa)). The chain crosses the membrane as a helical span at residues 101 to 119 (WFEHISMLVIMLNCVTLGM). Residues 120-141 (FRPCEDVECRSERCSILEAFDD) lie on the Extracellular side of the membrane. Aspartate 140 serves as a coordination point for Zn(2+). The chain crosses the membrane as a helical span at residues 142–160 (FIFAFFAVEMVIKMVALGL). The Cytoplasmic portion of the chain corresponds to 161 to 169 (FGQKCYLGD). The helical transmembrane segment at 170–184 (TWNRLDFFIVMAGMM) threads the bilayer. The Extracellular portion of the chain corresponds to 185–193 (EYSLDGHNV). Residues aspartate 189 and histidine 191 each coordinate Zn(2+). Asparagine 192 is a glycosylation site (N-linked (GlcNAc...) asparagine). A helical transmembrane segment spans residues 194-212 (SLSAIRTVRVLRPLRAINR). Residues 213–232 (VPSMRILVTLLLDTLPMLGN) lie on the Cytoplasmic side of the membrane. The chain crosses the membrane as a helical span at residues 233 to 253 (VLLLCFFVFFIFGIVGVQLWA). Residues 254 to 394 (GLLRNRCFLD…YYVMDAHSFY (141 aa)) lie on the Extracellular side of the membrane. A glycan (N-linked (GlcNAc...) asparagine) is linked at asparagine 271. The helical transmembrane segment at 395-419 (NFIYFILLIIVGSFFMINLCLVVIA) threads the bilayer. Topologically, residues 420-790 (TQFSETKQRE…SKLRRIVDSK (371 aa)) are cytoplasmic. Disordered stretches follow at residues 490–573 (VDPS…SESV), 618–656 (PSGAVNSKGSTSSRPKGLRSAGTPGATAHSPLSLGSPSP), and 737–761 (GDCRDPVQQPHEGGTPGHGNERWRP). A compositionally biased stretch (basic residues) spans 500–532 (GPRRRPRRAGRRTASVHHLVYHHHHHHHHHYHF). A compositionally biased stretch (pro residues) spans 557 to 566 (PPSPPSPGHG). Polar residues predominate over residues 621-631 (AVNSKGSTSSR). The stretch at 776–1015 (WASFSSKLRR…LLVAILVEGF (240 aa)) is one II repeat. A helical membrane pass occupies residues 791–811 (YFNRGIMAAILVNTLSMGVEY). Residues 812–824 (HEQPDELTNALEI) lie on the Extracellular side of the membrane. Residues 825–846 (SNIVFTSMFALEMLLKLLACGP) traverse the membrane as a helical segment. Residues 847–852 (LGYIRN) are Cytoplasmic-facing. A helical transmembrane segment spans residues 853–871 (PYNIFDGIVVIISVWEIVG). Over 872–879 (QADGGLSV) the chain is Extracellular. The chain crosses the membrane as a helical span at residues 880-903 (LRTFRLLRVLKLVRFLPALRRQLV). Over 904–914 (VLMRTMDNVAT) the chain is Cytoplasmic. Residues 915-935 (FCMLLMLFIFIFSILGMHLFG) traverse the membrane as a helical segment. Over 936–987 (CKFSLKTDSGDTVPDRKNFDSLLWAIVTVFQILTQEDWNVVLYNGMASTSSW) the chain is Extracellular. The helical transmembrane segment at 988–1012 (AALYFVALMTFGNYVLFNLLVAILV) threads the bilayer. Over 1013–1301 (EGFQAEGDAT…NRLRVSCQKV (289 aa)) the chain is Cytoplasmic. Residues 1059–1215 (PNGHLEGRGS…HRSTMDLCPP (157 aa)) are disordered. Residues 1130–1147 (GPNSAGSSRRSSWNSLGR) are compositionally biased toward low complexity. Positions 1199-1209 (RRAESLGHRST) are enriched in basic and acidic residues. An III repeat occupies 1292–1569 (NRLRVSCQKV…MFVGVVVENF (278 aa)). A helical transmembrane segment spans residues 1302–1324 (IAHKMFDHVVLVFIFLNCITIAL). Residues 1325–1342 (ERPDIDPGSTERAFLSVS) lie on the Extracellular side of the membrane. Residues 1343–1363 (NYIFTAIFVVEMMVKVVALGL) form a helical membrane-spanning segment. Over 1364–1373 (LWGEHAYLQS) the chain is Cytoplasmic. A helical membrane pass occupies residues 1374 to 1393 (SWNVLDGLLVLVSLVDIIVA). At 1394 to 1407 (VASAGGAKILGVLR) the chain is on the extracellular side. A helical membrane pass occupies residues 1408–1429 (VLRLLRTLRPLRVISRAPGLKL). Residues 1430 to 1439 (VVETLISSLR) lie on the Cytoplasmic side of the membrane. A helical membrane pass occupies residues 1440-1463 (PIGNIVLICCAFFIIFGILGVQLF). The Extracellular segment spans residues 1464–1540 (KGKFYYCEGT…DQQPVQNHNP (77 aa)). Residue asparagine 1477 is glycosylated (N-linked (GlcNAc...) asparagine). The chain crosses the membrane as a helical span at residues 1541 to 1566 (WMLLYFISFLLIVSFFVLNMFVGVVV). Residues 1567-1627 (ENFHKCRQHQ…RRSIHSLCTS (61 aa)) lie on the Cytoplasmic side of the membrane. An IV repeat occupies 1613–1874 (DYSHTRRSIH…VVVAVLMKHL (262 aa)). A helical membrane pass occupies residues 1628-1648 (HYLDLFITFIICLNVITMSME). Residues 1649–1662 (HYNQPKSLDEALKY) are Extracellular-facing. A helical membrane pass occupies residues 1663–1684 (CNYVFTIVFVFEAALKLVAFGF). Topologically, residues 1685–1691 (RRFFKDR) are cytoplasmic. Residues 1692 to 1710 (WNQLDLAIVLLSIMGIALE) form a helical membrane-spanning segment. Residues 1711 to 1724 (EIEMNAALPINPTI) lie on the Extracellular side of the membrane. Residues 1725–1748 (IRIMRVLRIARVLKLLKMATGMRA) traverse the membrane as a helical segment. Residues 1749–1762 (LLDTVVQALPQVGN) lie on the Cytoplasmic side of the membrane. The helical transmembrane segment at 1763-1783 (LGLLFMLLFFIYAALGVELFG) threads the bilayer. The Extracellular segment spans residues 1784–1846 (RLECSEDNPC…KHCLSYLPAL (63 aa)). A helical transmembrane segment spans residues 1847–1874 (SPVYFVTFVLVAQFVLVNVVVAVLMKHL). The Cytoplasmic segment spans residues 1875–2365 (EESNKEARED…APDDSGDEPV (491 aa)). Polar residues-rich tracts occupy residues 1897–1916 (QGSTAQPPSTAQESQGTEPD) and 1967–1983 (VTSAHSPSLEPRTSFQV). Disordered regions lie at residues 1897-1920 (QGSTAQPPSTAQESQGTEPDTPNL), 1967-1999 (VTSAHSPSLEPRTSFQVPSAASSPARVSDPLCA), 2053-2264 (APLG…GERW), and 2321-2365 (ELSM…DEPV). Residues 2092-2102 (DDAEAADPADE) show a composition bias toward acidic residues. Over residues 2172–2187 (GDGHLESGEVRARASE) the composition is skewed to basic and acidic residues.

This sequence belongs to the calcium channel alpha-1 subunit (TC 1.A.1.11) family. CACNA1H subfamily. Interacts (via N-terminal cytoplasmic domain) with STAC. In terms of processing, in response to raising of intracellular calcium, the T-type channels are activated by CaM-kinase II. Is highly expressed in lumbosacral and thoracolumbar dorsal root ganglion neurons.

The protein localises to the cell membrane. It carries out the reaction Ca(2+)(in) = Ca(2+)(out). Functionally, voltage-sensitive calcium channel that gives rise to T-type calcium currents. T-type calcium channels belong to the 'low-voltage activated (LVA)' group. A particularity of this type of channel is an opening at quite negative potentials, and a voltage-dependent inactivation. T-type channels serve pacemaking functions in both central neurons and cardiac nodal cells and support calcium signaling in secretory cells and vascular smooth muscle. They may also be involved in the modulation of firing patterns of neurons. In the adrenal zona glomerulosa, participates in the signaling pathway leading to aldosterone production in response to either AGT/angiotensin II, or hyperkalemia. The polypeptide is Voltage-dependent T-type calcium channel subunit alpha-1H (Cacna1h) (Mus musculus (Mouse)).